A 263-amino-acid chain; its full sequence is 4-hydroxy-2-oxo-heptane-1,7-dioate aldolase (263 aa).

Histidine 45 (proton acceptor) is an active-site residue. Glutamine 147 contacts substrate. Glutamate 149 is an a divalent metal cation binding site. Substrate contacts are provided by alanine 174 and aspartate 175. Aspartate 175 provides a ligand contact to a divalent metal cation.

This sequence belongs to the HpcH/HpaI aldolase family. Homohexamer; trimer of dimers. The cofactor is a divalent metal cation.

It carries out the reaction 4-hydroxy-2-oxoheptanedioate = succinate semialdehyde + pyruvate. It participates in aromatic compound metabolism; 4-hydroxyphenylacetate degradation; pyruvate and succinate semialdehyde from 4-hydroxyphenylacetate: step 7/7. Its function is as follows. Catalyzes the reversible retro-aldol cleavage of 4-hydroxy-2-ketoheptane-1,7-dioate (HKHD) to pyruvate and succinic semialdehyde. This Salmonella typhimurium (strain LT2 / SGSC1412 / ATCC 700720) protein is 4-hydroxy-2-oxo-heptane-1,7-dioate aldolase.